Consider the following 1742-residue polypeptide: Kinase non-catalytic C-lobe domain-containing protein 1 (1742 aa).

Residues 37 to 217 (VSLADILSLR…QELSENTWRG (181 aa)) enclose the KIND 1 domain. 2 disordered regions span residues 215 to 288 (WRGR…EGLA) and 365 to 455 (FKTQ…TEQS). Position 267 is a phosphoserine (S267). Polar residues predominate over residues 403–412 (LEASSPSQGS). Over residues 426 to 445 (DSDHEGHIPRSEEKIPEESR) the composition is skewed to basic and acidic residues. A KIND 2 domain is found at 456–620 (LSLKDLLSKL…RASTCKVHPE (165 aa)). Disordered stretches follow at residues 703 to 727 (DQLA…REGT), 744 to 876 (SNQL…KMTA), 948 to 1006 (GPAS…LSDI), and 1028 to 1076 (VTRE…ASDF). Basic and acidic residues predominate over residues 711 to 727 (SNEKPKEGSGHLDREGT). Residues 755-771 (GATPDPDGDSGSPSSAT) show a composition bias toward low complexity. A compositionally biased stretch (polar residues) spans 782–791 (VTQQKGTSGT). The span at 847 to 861 (SDGHPEKPRPADRKL) shows a compositional bias: basic and acidic residues. Positions 949-965 (PASPSESTSEEPGSQPE) are enriched in low complexity. The residue at position 951 (S951) is a Phosphoserine. Residues 1043 to 1053 (GPSQDSTSHAS) show a composition bias toward polar residues. Residues 1112–1177 (HTELEAQSPE…EMKSKVQFLS (66 aa)) adopt a coiled-coil conformation. Residues 1239–1367 (KARILQAGTP…ALLEVGTERR (129 aa)) enclose the N-terminal Ras-GEF domain. In terms of domain architecture, Ras-GEF spans 1461–1712 (STNQLFTQLT…SGADVSILAA (252 aa)).

In terms of assembly, interacts (via KIND2) with MAP2; the interaction enhances MAP2 phosphorylation and localizes KNDC1 to dendrites. Highly expressed in the brain and at low levels in the ovary. In the brain it is most prominently expressed in the cerebellum where it is restricted to the granular Purkinje cell layer.

It is found in the cell projection. The protein localises to the dendrite. It localises to the perikaryon. RAS-Guanine nucleotide exchange factor (GEF) that controls the negative regulation of neuronal dendrite growth by mediating a signaling pathway linking RAS and MAP2. May be involved in cellular senescence. The chain is Kinase non-catalytic C-lobe domain-containing protein 1 from Mus musculus (Mouse).